The sequence spans 348 residues: D-erythrose-4-phosphate dehydrogenase (348 aa).

NAD(+) is bound by residues 12-13 (RI) and arginine 81. Residues 154-156 (SCT), arginine 200, 213-214 (TK), and arginine 236 each bind substrate. Residue cysteine 155 is the Nucleophile of the active site. Asparagine 318 is a binding site for NAD(+).

It belongs to the glyceraldehyde-3-phosphate dehydrogenase family. Epd subfamily. In terms of assembly, homotetramer.

It localises to the cytoplasm. The enzyme catalyses D-erythrose 4-phosphate + NAD(+) + H2O = 4-phospho-D-erythronate + NADH + 2 H(+). It functions in the pathway cofactor biosynthesis; pyridoxine 5'-phosphate biosynthesis; pyridoxine 5'-phosphate from D-erythrose 4-phosphate: step 1/5. Functionally, catalyzes the NAD-dependent conversion of D-erythrose 4-phosphate to 4-phosphoerythronate. In Salmonella agona (strain SL483), this protein is D-erythrose-4-phosphate dehydrogenase.